Consider the following 138-residue polypeptide: Basic phospholipase A2 ammodytoxin A (138 aa).

A signal peptide spans 1 to 16; it reads MRTLWIVAVCLIGVEG. Disulfide bonds link cysteine 42–cysteine 131, cysteine 44–cysteine 60, cysteine 59–cysteine 111, cysteine 65–cysteine 138, cysteine 66–cysteine 104, cysteine 73–cysteine 97, and cysteine 91–cysteine 102. Ca(2+) contacts are provided by tyrosine 43, glycine 45, and glycine 47. Histidine 63 is a catalytic residue. Residue aspartate 64 participates in Ca(2+) binding. Aspartate 105 is an active-site residue.

The protein belongs to the phospholipase A2 family. Group II subfamily. D49 sub-subfamily. In terms of assembly, monomer. Binds to calmodulin, coagulation factor X (F10), M-type PLA2 receptor (R-180). May also bind to 14-3-3 proteins gamma (YWHAG) and epsilon (YWHAE), and R25, a mitochondrial membrane protein. Ca(2+) serves as cofactor. In terms of tissue distribution, expressed by the venom gland.

The protein localises to the secreted. It localises to the host cytoplasm. The protein resides in the host cytosol. The catalysed reaction is a 1,2-diacyl-sn-glycero-3-phosphocholine + H2O = a 1-acyl-sn-glycero-3-phosphocholine + a fatty acid + H(+). Functionally, snake venom phospholipase A2 (PLA2) that acts as a presynaptic neurotoxin, an inhibitor of blood coagulation, and has been found to bind with high affinity to intracellular proteins. The response of indirectly stimulated neuromuscular preparations to ammodytoxin (Atx) is triphasic. The first phase, the transient inhibition of the acetylcholine (ACh) release, starts soon after the addition of Atx and lasts for several minutes. This phase is probably independent of Atx enzymatic activity. The effect may be due to the specific binding of the toxin to presynaptic receptors. These receptors, called N-type receptors, are still unidentified. It is noteworthy that a neuronal isoform of the M-type PLA2 receptor (R180) has been identified as a high-affinity receptor for Atx in neuronal plasma membranes. It was demonstrated however that this receptor is not essential for expression of neurotoxicity by Atx. The second phase corresponds to an augmentation of neurotransmitter release. A peak is reached 10-20 minutes after exposure of the preparation to Atx and is followed by a gradual reduction. In this phase, the enzymatic activity of Atx of the mammalian is not significant. It is speculated that the increased release of neurotransmitter in this phase is induced by the interference of Atx with voltage-gated potassium channels. Measurements of ionic currents showed however that voltage-gated potassium channels are not affected by Atx. The third phase of the response of neuromuscular preparations to Atx, which corresponds to a complete and irreversible paralysis, is clearly dependent on the hydrolytic activity of the toxin. In addition to its presynaptic neurotoxicity, Atx shows an anticoagulant activity by binding with high affinity to activated coagulation factor X (F10) thus inhibiting the formation of the prothrombinase complex (FX/FV) and its activity (IC(50) is 20 nM). Surprisingly, Atx was discovered to bind intracellular proteins such as calmodulin (CaM) (IC(50) is 6 nM), 14-3-3 proteins gamma (YWHAG) and epsilon (YWHAE) (by similarity with AtxC), as well as R25 (by similarity with AtxC), a mitochondrial integral membrane protein found in cerebral cortex. These findings raised a doubt about the dogma of the exclusively extracellular action of PLA2s, defended by the potential instability of these molecules in the reducing environment of the eukaryotic cytosol coupled with their possible inability to act as enzymes in this cellular compartment, due to too low concentration of calcium ions. This hypothesis was challenged efficiently by demonstrating the internalization of AtxA into a culture cells, but still remains to be directly demonstrated in vivo. PLA2 catalyzes the calcium-dependent hydrolysis of the 2-acyl groups in 3-sn-phosphoglycerides. This Vipera ammodytes ammodytes (Western sand viper) protein is Basic phospholipase A2 ammodytoxin A.